A 360-amino-acid polypeptide reads, in one-letter code: Photosystem II protein D1 2 (360 aa).

Helical transmembrane passes span 29 to 46, 118 to 133, and 142 to 156; these read YIGW…SATI, HFLI…EWEF, and WICV…AATA. Position 118 (H118) interacts with chlorophyll a. Residue Y126 participates in pheophytin a binding. [CaMn4O5] cluster contacts are provided by D170 and E189. Residues 197 to 218 traverse the membrane as a helical segment; the sequence is LHMFGVAGVFGGSLFAAMHGSL. Residue H198 coordinates chlorophyll a. A quinone contacts are provided by residues H215 and 264–265; that span reads SF. H215 contacts Fe cation. Fe cation is bound at residue H272. The chain crosses the membrane as a helical span at residues 274-288; sequence FLAAWPVIGIWLTSL. Residues H332, E333, D342, and A344 each coordinate [CaMn4O5] cluster. Residues 345–360 constitute a propeptide that is removed on maturation; that stretch reads GTESAPVAFAAALGDG.

The protein belongs to the reaction center PufL/M/PsbA/D family. As to quaternary structure, PSII is composed of 1 copy each of membrane proteins PsbA, PsbB, PsbC, PsbD, PsbE, PsbF, PsbH, PsbI, PsbJ, PsbK, PsbL, PsbM, PsbT, PsbX, Psb30/Ycf12, peripheral proteins PsbO, CyanoQ (PsbQ), PsbU, PsbV and a large number of cofactors. It forms dimeric complexes. The D1/D2 heterodimer binds P680, chlorophylls that are the primary electron donor of PSII, and subsequent electron acceptors. It shares a non-heme iron and each subunit binds pheophytin, quinone, additional chlorophylls, carotenoids and lipids. D1 provides most of the ligands for the Mn4-Ca-O5 cluster of the oxygen-evolving complex (OEC). There is also a Cl(-1) ion associated with D1 and D2, which is required for oxygen evolution. The PSII complex binds additional chlorophylls, carotenoids and specific lipids. is required as a cofactor. Post-translationally, tyr-161 forms a radical intermediate that is referred to as redox-active TyrZ, YZ or Y-Z. In terms of processing, C-terminally processed by CtpA; processing is essential to allow assembly of the oxygen-evolving complex and thus photosynthetic growth.

It localises to the cell inner membrane. It catalyses the reaction 2 a plastoquinone + 4 hnu + 2 H2O = 2 a plastoquinol + O2. In terms of biological role, photosystem II (PSII) is a light-driven water:plastoquinone oxidoreductase that uses light energy to abstract electrons from H(2)O, generating O(2) and a proton gradient subsequently used for ATP formation. It consists of a core antenna complex that captures photons, and an electron transfer chain that converts photonic excitation into a charge separation. The D1/D2 (PsbA/PsbD) reaction center heterodimer binds P680, the primary electron donor of PSII as well as several subsequent electron acceptors. The sequence is that of Photosystem II protein D1 2 from Gloeobacter violaceus (strain ATCC 29082 / PCC 7421).